The following is a 161-amino-acid chain: Large ribosomal subunit protein uL11 (161 aa).

It belongs to the universal ribosomal protein uL11 family. In terms of assembly, part of the ribosomal stalk of the 50S ribosomal subunit. Interacts with L10 and the large rRNA to form the base of the stalk. L10 forms an elongated spine to which L12 dimers bind in a sequential fashion forming a multimeric L10(L12)X complex.

Its function is as follows. Forms part of the ribosomal stalk which helps the ribosome interact with GTP-bound translation factors. The polypeptide is Large ribosomal subunit protein uL11 (Methanosarcina acetivorans (strain ATCC 35395 / DSM 2834 / JCM 12185 / C2A)).